Consider the following 244-residue polypeptide: ATP synthase subunit a (244 aa).

7 helical membrane passes run 20–40, 81–101, 113–133, 140–160, 176–196, 202–222, and 223–243; these read FFDVSITTITVYLGLLMVIVI, GILFFPFIMSLFLFVLTLNVM, QLLVTFTLAITIMIGITIWGF, FLNIFVPSGIEPWLLPLLVFI, LFANMLAGHLLIHIIGVAAIY, FIGILPWICVIAFMFLELGIA, and FLQAYVFVLLTLIYIANIINL.

It belongs to the ATPase A chain family. As to quaternary structure, F-type ATPases have 2 components, CF(1) - the catalytic core - and CF(0) - the membrane proton channel. CF(1) has five subunits: alpha(3), beta(3), gamma(1), delta(1), epsilon(1). CF(0) has three main subunits: a, b and c.

The protein resides in the mitochondrion inner membrane. Mitochondrial membrane ATP synthase (F(1)F(0) ATP synthase or Complex V) produces ATP from ADP in the presence of a proton gradient across the membrane which is generated by electron transport complexes of the respiratory chain. F-type ATPases consist of two structural domains, F(1) - containing the extramembraneous catalytic core and F(0) - containing the membrane proton channel, linked together by a central stalk and a peripheral stalk. During catalysis, ATP synthesis in the catalytic domain of F(1) is coupled via a rotary mechanism of the central stalk subunits to proton translocation. Key component of the proton channel; it may play a direct role in the translocation of protons across the membrane. In Dictyostelium citrinum (Slime mold), this protein is ATP synthase subunit a (atp6).